Consider the following 292-residue polypeptide: Ribosomal RNA small subunit methyltransferase A (292 aa).

S-adenosyl-L-methionine is bound by residues Asn29, Leu31, Gly56, Glu77, Asp102, and Asn127.

This sequence belongs to the class I-like SAM-binding methyltransferase superfamily. rRNA adenine N(6)-methyltransferase family. RsmA subfamily.

It localises to the cytoplasm. It catalyses the reaction adenosine(1518)/adenosine(1519) in 16S rRNA + 4 S-adenosyl-L-methionine = N(6)-dimethyladenosine(1518)/N(6)-dimethyladenosine(1519) in 16S rRNA + 4 S-adenosyl-L-homocysteine + 4 H(+). Functionally, specifically dimethylates two adjacent adenosines (A1518 and A1519) in the loop of a conserved hairpin near the 3'-end of 16S rRNA in the 30S particle. May play a critical role in biogenesis of 30S subunits. This Bacillus licheniformis (strain ATCC 14580 / DSM 13 / JCM 2505 / CCUG 7422 / NBRC 12200 / NCIMB 9375 / NCTC 10341 / NRRL NRS-1264 / Gibson 46) protein is Ribosomal RNA small subunit methyltransferase A.